The sequence spans 77 residues: Beta-defensin 135 (77 aa).

The signal sequence occupies residues 1 to 24 (MATRSVLLALVVLNLLFYVPPGRS). 3 disulfides stabilise this stretch: Cys-37/Cys-64, Cys-44/Cys-58, and Cys-48/Cys-65.

This sequence belongs to the beta-defensin family.

It localises to the secreted. Its function is as follows. Has antibacterial activity. This Homo sapiens (Human) protein is Beta-defensin 135 (DEFB135).